The following is a 296-amino-acid chain: Meiotically up-regulated gene 2 protein (296 aa).

The protein belongs to the UPF0612 family.

It localises to the cytoplasm. The protein localises to the nucleus. Its function is as follows. Has a role in meiosis. This Schizosaccharomyces pombe (strain 972 / ATCC 24843) (Fission yeast) protein is Meiotically up-regulated gene 2 protein (mug2).